A 604-amino-acid polypeptide reads, in one-letter code: Glucose oxidase (604 aa).

The first 18 residues, 1 to 18 (MKSTIITSILFSVATVQA), serve as a signal peptide directing secretion. L52, T53, and E73 together coordinate FAD. The N-linked (GlcNAc...) asparagine glycan is linked to N111. FAD-binding residues include S125, N129, G130, and S132. C186 and C228 are oxidised to a cystine. N213 carries N-linked (GlcNAc...) asparagine glycosylation. Residue V272 participates in FAD binding. 3 N-linked (GlcNAc...) asparagine glycosylation sites follow: N278, N409, and N531. H537 acts as the Proton acceptor in catalysis. O2 is bound by residues K558 and V559. Residues G570 and M582 each coordinate FAD.

The protein belongs to the GMC oxidoreductase family. Homodimer. Requires FAD as cofactor.

The protein resides in the secreted. It is found in the cell wall. It localises to the cytoplasm. The protein localises to the extracellular space. Its subcellular location is the extracellular matrix. It catalyses the reaction beta-D-glucose + O2 = D-glucono-1,5-lactone + H2O2. Glucose oxidase catalyzes the oxidation of beta-D-glucose to D-glucono-delta-lactone and hydrogen peroxide in the presence of molecular oxygen. The enzyme also catalyzes the reaction with D-xylose but at a much lower rate. Shows any activities against D-fructose, D-galactose and D-arabinose. The enzyme is cytotoxic for a series of bacteria, yeasts and filamentous fungi and acts primarily via the liberation of H(2)O(2), which is a harmful oxidative stress-generating agent. This chain is Glucose oxidase, found in Penicillium chrysogenum (Penicillium notatum).